The following is a 156-amino-acid chain: Small ribosomal subunit protein uS7 (156 aa).

It belongs to the universal ribosomal protein uS7 family. As to quaternary structure, part of the 30S ribosomal subunit. Contacts proteins S9 and S11.

One of the primary rRNA binding proteins, it binds directly to 16S rRNA where it nucleates assembly of the head domain of the 30S subunit. Is located at the subunit interface close to the decoding center, probably blocks exit of the E-site tRNA. In Photobacterium profundum (strain SS9), this protein is Small ribosomal subunit protein uS7.